A 785-amino-acid polypeptide reads, in one-letter code: LPS-assembly protein LptD (785 aa).

The signal sequence occupies residues 1–58 (MSCSCLCMSLYRGADRIGRFYTAHCPQDMALCMHRQKLNPLALALAAAFALNAPAALA).

It belongs to the LptD family. Component of the lipopolysaccharide transport and assembly complex. Interacts with LptE and LptA.

It localises to the cell outer membrane. In terms of biological role, together with LptE, is involved in the assembly of lipopolysaccharide (LPS) at the surface of the outer membrane. The chain is LPS-assembly protein LptD from Chromobacterium violaceum (strain ATCC 12472 / DSM 30191 / JCM 1249 / CCUG 213 / NBRC 12614 / NCIMB 9131 / NCTC 9757 / MK).